A 793-amino-acid chain; its full sequence is MDSNNNNNNENEAFSGASESSEFRKIVEENENEREFEQSNPSPPEYSNYENKDDGINLETINPNISLDNNNNNNQNNQNNQNNNNNNNNQNNNIINNLNKKNKKRSTFKNRIDFSFKDINHYVQITEKGKKKKISKQILTNINGHIESGTIFAIMGPSGAGKTTLLDILAHRLNINGSGTMYLNGNKSDFNIFKKLCGYVTQSDSLMPSLTVRETLNFYAQLKMPRDVPLKEKLQRVQDIIDEMGLNRCADTLVGTADNKIRGISGGERRRVTISIELLTGPSVILLDEPTSGLDASTSFYVMSALKKLAKSGRTIICTIHQPRSNIYDMFDNLLLLGDGNTIYYGKANKALEYFNANGYHCSEKTNPADFFLDLINTQVEDQADSDDDDYNDEEEEIGGGGGGSGGGAGGIEDIGISISPTMNGSAVDNIKNNELKQQQQQQQQQQQSTDGRARRRIKKLTKEEMVILKKEYPNSEQGLRVNETLDNISKENRTDFKYEKTRGPNFLTQFSLLLGREVTNAKRHPMAFKVNLIQAIFQGLLCGIVYYQLGLGQSSVQSRTGVVAFIIMGVSFPAVMSTIHVFPDVITIFLKDRASGVYDTLPFFLAKSFMDACIAVLLPMVTATIVYWMTNQRVDPFYSAAPFFRFVLMLVLASQTCLSLGVLISSSVPNVQVGTAVAPLIVILFFLFSGFFINLNDVPGWLVWFPYISFFRYMIEAAVINAFKDVHFTCTDSQKIGGVCPVQYGNNVIENMGYDIDHFWRNVWILVLYIIGFRVLTFLVLKLKSRNKFKQE.

A compositionally biased stretch (low complexity) spans 1–20 (MDSNNNNNNENEAFSGASES). Residues 1–96 (MDSNNNNNNE…NNNQNNNIIN (96 aa)) form a disordered region. The span at 21 to 37 (SEFRKIVEENENEREFE) shows a compositional bias: basic and acidic residues. Positions 59 to 68 (ETINPNISLD) are enriched in polar residues. A coiled-coil region spans residues 67–102 (LDNNNNNNQNNQNNQNNNNNNNNQNNNIINNLNKKN). A compositionally biased stretch (low complexity) spans 69–96 (NNNNNNQNNQNNQNNNNNNNNQNNNIIN). One can recognise an ABC transporter domain in the interval 123 to 364 (VQITEKGKKK…FNANGYHCSE (242 aa)). 156-163 (GPSGAGKT) is an ATP binding site. Over residues 382–398 (DQADSDDDDYNDEEEEI) the composition is skewed to acidic residues. The segment at 382-457 (DQADSDDDDY…QSTDGRARRR (76 aa)) is disordered. The span at 399-413 (GGGGGGSGGGAGGIE) shows a compositional bias: gly residues. Over residues 421–437 (PTMNGSAVDNIKNNELK) the composition is skewed to polar residues. Over residues 438–448 (QQQQQQQQQQQ) the composition is skewed to low complexity. In terms of domain architecture, ABC transmembrane type-2 spans 527 to 785 (MAFKVNLIQA…VLTFLVLKLK (259 aa)). 7 helical membrane-spanning segments follow: residues 533–553 (LIQA…LGLG), 563–583 (VVAF…IHVF), 610–630 (FMDA…VYWM), 647–667 (FVLM…LISS), 674–694 (VGTA…GFFI), 701–721 (GWLV…AAVI), and 764–784 (VWIL…VLKL).

It belongs to the ABC transporter superfamily. ABCG family.

It is found in the membrane. This chain is ABC transporter G family member 1 (abcG1), found in Dictyostelium discoideum (Social amoeba).